The chain runs to 417 residues: Serine hydroxymethyltransferase (417 aa).

Residues Leu-112 and 116–118 (GHL) contribute to the (6S)-5,6,7,8-tetrahydrofolate site. Lys-221 is modified (N6-(pyridoxal phosphate)lysine). Position 247 (Glu-247) interacts with (6S)-5,6,7,8-tetrahydrofolate.

It belongs to the SHMT family. In terms of assembly, homodimer. Requires pyridoxal 5'-phosphate as cofactor.

Its subcellular location is the cytoplasm. The catalysed reaction is (6R)-5,10-methylene-5,6,7,8-tetrahydrofolate + glycine + H2O = (6S)-5,6,7,8-tetrahydrofolate + L-serine. It participates in one-carbon metabolism; tetrahydrofolate interconversion. It functions in the pathway amino-acid biosynthesis; glycine biosynthesis; glycine from L-serine: step 1/1. In terms of biological role, catalyzes the reversible interconversion of serine and glycine with tetrahydrofolate (THF) serving as the one-carbon carrier. This reaction serves as the major source of one-carbon groups required for the biosynthesis of purines, thymidylate, methionine, and other important biomolecules. Also exhibits THF-independent aldolase activity toward beta-hydroxyamino acids, producing glycine and aldehydes, via a retro-aldol mechanism. The sequence is that of Serine hydroxymethyltransferase from Borreliella afzelii (strain PKo) (Borrelia afzelii).